A 199-amino-acid chain; its full sequence is MTRCDDRPSASQISITHVTQGSCVASSSPNEVYATILGSCICTCMCDPVAGVGGMNHFLLPSADVEDAQHLRYGSHAMELLINALLKLGAARQRIEAKIFGGAMMTPQLGAIGQANAAFARRYLRDEGIRCTAHSLGGNRARRIRFWPKTGRVQQMFLGSEDVVPNEQPQFRLQGGAGDVTFFDRHNNAEMPDPIKEPR.

This sequence belongs to the CheD family.

It carries out the reaction L-glutaminyl-[protein] + H2O = L-glutamyl-[protein] + NH4(+). In terms of biological role, probably deamidates glutamine residues to glutamate on methyl-accepting chemotaxis receptors (MCPs), playing an important role in chemotaxis. This is Probable chemoreceptor glutamine deamidase CheD from Cereibacter sphaeroides (Rhodobacter sphaeroides).